The following is a 351-amino-acid chain: UDP-N-acetylglucosamine--N-acetylmuramyl-(pentapeptide) pyrophosphoryl-undecaprenol N-acetylglucosamine transferase (351 aa).

Residues 13-15 (TGG), Asn125, Arg161, Ser189, Ile241, 260-265 (ALTVCE), and Gln285 each bind UDP-N-acetyl-alpha-D-glucosamine.

The protein belongs to the glycosyltransferase 28 family. MurG subfamily.

It is found in the cell inner membrane. It carries out the reaction di-trans,octa-cis-undecaprenyl diphospho-N-acetyl-alpha-D-muramoyl-L-alanyl-D-glutamyl-meso-2,6-diaminopimeloyl-D-alanyl-D-alanine + UDP-N-acetyl-alpha-D-glucosamine = di-trans,octa-cis-undecaprenyl diphospho-[N-acetyl-alpha-D-glucosaminyl-(1-&gt;4)]-N-acetyl-alpha-D-muramoyl-L-alanyl-D-glutamyl-meso-2,6-diaminopimeloyl-D-alanyl-D-alanine + UDP + H(+). It participates in cell wall biogenesis; peptidoglycan biosynthesis. Functionally, cell wall formation. Catalyzes the transfer of a GlcNAc subunit on undecaprenyl-pyrophosphoryl-MurNAc-pentapeptide (lipid intermediate I) to form undecaprenyl-pyrophosphoryl-MurNAc-(pentapeptide)GlcNAc (lipid intermediate II). This chain is UDP-N-acetylglucosamine--N-acetylmuramyl-(pentapeptide) pyrophosphoryl-undecaprenol N-acetylglucosamine transferase, found in Haemophilus influenzae (strain PittGG).